Here is a 222-residue protein sequence, read N- to C-terminus: Adapter protein MecA (222 aa).

The protein belongs to the MecA family. Homodimer.

In terms of biological role, enables the recognition and targeting of unfolded and aggregated proteins to the ClpC protease or to other proteins involved in proteolysis. The chain is Adapter protein MecA from Lysinibacillus sphaericus (strain C3-41).